A 446-amino-acid chain; its full sequence is C-type lectin domain family 18 member C (446 aa).

The signal sequence occupies residues Met1 to Ala26. The region spanning Leu52–Tyr182 is the SCP domain. The N-linked (GlcNAc...) asparagine glycan is linked to Asn144. The EGF-like domain occupies Pro228–Gln261. 4 cysteine pairs are disulfide-bonded: Cys236–Cys249, Cys251–Cys260, Cys327–Cys432, and Cys408–Cys424. Positions Ile306–Gln433 constitute a C-type lectin domain.

In terms of tissue distribution, detected in peripheral blood cells.

The protein resides in the secreted. Its subcellular location is the endoplasmic reticulum. It is found in the golgi apparatus. It localises to the endosome. Binds polysaccharidesin a Ca(2+)-independent manner with a preferentially binding to fucoidan, beta-glucans and galactans. This Homo sapiens (Human) protein is C-type lectin domain family 18 member C (CLEC18C).